Here is a 34-residue protein sequence, read N- to C-terminus: Protein MgtT (34 aa).

Residues 1 to 34 (MNGDNPSPNRPLVTVVYKGPDFYDGEKKPPVNRR) form a disordered region. Residues 24 to 34 (DGEKKPPVNRR) show a composition bias toward basic and acidic residues.

The sequence is that of Protein MgtT from Escherichia coli (strain K12).